Consider the following 404-residue polypeptide: Argininosuccinate synthase (404 aa).

ATP-binding positions include 10-18 (AYSGGVDTS) and A38. An L-citrulline-binding site is contributed by Y89. G119 contributes to the ATP binding site. L-aspartate is bound by residues T121, N125, and D126. Residue N125 coordinates L-citrulline. L-citrulline is bound by residues R129, S177, S186, E262, and Y274.

The protein belongs to the argininosuccinate synthase family. Type 1 subfamily. Homotetramer.

Its subcellular location is the cytoplasm. The enzyme catalyses L-citrulline + L-aspartate + ATP = 2-(N(omega)-L-arginino)succinate + AMP + diphosphate + H(+). The protein operates within amino-acid biosynthesis; L-arginine biosynthesis; L-arginine from L-ornithine and carbamoyl phosphate: step 2/3. The chain is Argininosuccinate synthase from Prochlorococcus marinus (strain AS9601).